Here is a 132-residue protein sequence, read N- to C-terminus: Protein MrkF (132 aa).

The protein resides in the fimbrium. In terms of biological role, appears to affect the stability of the intact fimbriae on the cell surface. The polypeptide is Protein MrkF (mrkF) (Klebsiella pneumoniae).